The primary structure comprises 296 residues: Transposase for insertion sequence element IS629 (296 aa).

An Integrase catalytic domain is found at 125–285; it reads VAERPDQLWV…TPPAEAEKAY (161 aa).

Involved in the transposition of the insertion sequence. This is Transposase for insertion sequence element IS629 from Shigella sonnei.